The sequence spans 73 residues: Copper chaperone ATX1 (73 aa).

In terms of domain architecture, HMA spans 4 to 68 (IKHYQFNVVM…KIKKTGKEVR (65 aa)). Residues Cys15 and Cys18 each coordinate Cu(+).

This sequence belongs to the ATX1 family. As to quaternary structure, homodimer. Interacts with CCC2 via the copper anion.

It is found in the cytoplasm. Tetrathiomolybdate directly and reversibly down-regulates copper delivery to secreted metalloenzymes. Its function is as follows. Copper homeostasis factor that specifically transports copper to the secretory pathway for incorporation into copper enzymes destined for the cell surface or extracellular milieu. Shuttles copper to the transport ATPase CCC2 on a post-Golgi vesicle for eventual targeting to the cell-surface high-affinity iron uptake protein FET3. Protects against oxygen toxicity. The sequence is that of Copper chaperone ATX1 from Saccharomyces cerevisiae (strain ATCC 204508 / S288c) (Baker's yeast).